The primary structure comprises 529 residues: Polygalacturonase (529 aa).

Residues 1–21 (MNHRYTLLALAAAALSAGAHA) form the signal peptide. Residue Asp305 is the Proton donor of the active site. His331 is a catalytic residue. A required for PGA export across the outer membrane and catalytic activity region spans residues 516 to 529 (AFVPLKSVAPTSPI).

The protein belongs to the glycosyl hydrolase 28 family. As to quaternary structure, monomer.

The protein resides in the secreted. It carries out the reaction (1,4-alpha-D-galacturonosyl)n+m + H2O = (1,4-alpha-D-galacturonosyl)n + (1,4-alpha-D-galacturonosyl)m.. Its function is as follows. Contributes to the wilt disease production on tomato. The sequence is that of Polygalacturonase (pglA) from Ralstonia solanacearum (Pseudomonas solanacearum).